We begin with the raw amino-acid sequence, 342 residues long: Protein-glutamate methylesterase/protein-glutamine glutaminase 3 (342 aa).

The region spanning 3 to 120 (RVLVVEDMPT…SPGFADDARR (118 aa)) is the Response regulatory domain. Residue Asp54 is modified to 4-aspartylphosphate. In terms of domain architecture, CheB-type methylesterase spans 152 to 342 (DVPRGRVVAV…ADRLALWLRR (191 aa)). Residues Ser164, His191, and Asp285 contribute to the active site.

Belongs to the CheB family. In terms of processing, phosphorylated by CheA. Phosphorylation of the N-terminal regulatory domain activates the methylesterase activity.

Its subcellular location is the cytoplasm. The enzyme catalyses [protein]-L-glutamate 5-O-methyl ester + H2O = L-glutamyl-[protein] + methanol + H(+). It carries out the reaction L-glutaminyl-[protein] + H2O = L-glutamyl-[protein] + NH4(+). Functionally, involved in chemotaxis. Part of a chemotaxis signal transduction system that modulates chemotaxis in response to various stimuli. Catalyzes the demethylation of specific methylglutamate residues introduced into the chemoreceptors (methyl-accepting chemotaxis proteins or MCP) by CheR. Also mediates the irreversible deamidation of specific glutamine residues to glutamic acid. The chain is Protein-glutamate methylesterase/protein-glutamine glutaminase 3 from Anaeromyxobacter dehalogenans (strain 2CP-C).